A 182-amino-acid polypeptide reads, in one-letter code: CDP-diacylglycerol--glycerol-3-phosphate 3-phosphatidyltransferase (182 aa).

Residues 1 to 12 (MQLNIPTWLTLF) are Cytoplasmic-facing. A helical transmembrane segment spans residues 13-37 (RVVLIPFFVLAFYLPFVWAPMVCAI). Residues 38–60 (IFVFAAATDWFDGFLARRWKQTT) are Periplasmic-facing. The chain crosses the membrane as a helical span at residues 61–81 (RFGAFLDPVADKVMVAIALVL). The Cytoplasmic portion of the chain corresponds to 82–86 (VAEHY). A helical transmembrane segment spans residues 87–107 (HVWWITLPAATMIAREIIISS). The Periplasmic portion of the chain corresponds to 108 to 145 (LREWMAEIGKRSSVAVSWIGKVKTTAQMGSLVGLLWRP). The chain crosses the membrane as a helical span at residues 146 to 168 (DHNIELASFVLLYIAAVLTFWSM). The Cytoplasmic segment spans residues 169 to 181 (FQYLNAAWKDLLE).

This sequence belongs to the CDP-alcohol phosphatidyltransferase class-I family.

The protein resides in the cell inner membrane. It carries out the reaction a CDP-1,2-diacyl-sn-glycerol + sn-glycerol 3-phosphate = a 1,2-diacyl-sn-glycero-3-phospho-(1'-sn-glycero-3'-phosphate) + CMP + H(+). Its pathway is phospholipid metabolism; phosphatidylglycerol biosynthesis; phosphatidylglycerol from CDP-diacylglycerol: step 1/2. Catalyzes the conversion of cytidine diphosphate diacylglycerol (CDP-DG) and glycerol 3-phosphate into phosphatidylglycerol. Essential for the synthesis of anionic phospholipids, thereby playing a role in balancing the ratio of zwitterionic and anionic phospholipids, which is thought to be important for normal membrane function. The chain is CDP-diacylglycerol--glycerol-3-phosphate 3-phosphatidyltransferase from Yersinia enterocolitica serotype O:8 / biotype 1B (strain NCTC 13174 / 8081).